The primary structure comprises 486 residues: Cysteine--tRNA ligase (486 aa).

Zn(2+) is bound at residue C29. A 'HIGH' region motif is present at residues 31–41 (VTVYDYCHLGH). 3 residues coordinate Zn(2+): C217, H242, and E246. The 'KMSKS' region motif lies at 274-278 (KMSKS). K277 is an ATP binding site.

It belongs to the class-I aminoacyl-tRNA synthetase family. As to quaternary structure, monomer. Zn(2+) serves as cofactor.

Its subcellular location is the cytoplasm. It catalyses the reaction tRNA(Cys) + L-cysteine + ATP = L-cysteinyl-tRNA(Cys) + AMP + diphosphate. This Thermosynechococcus vestitus (strain NIES-2133 / IAM M-273 / BP-1) protein is Cysteine--tRNA ligase.